Consider the following 233-residue polypeptide: Large ribosomal subunit protein uL1 (233 aa).

It belongs to the universal ribosomal protein uL1 family. In terms of assembly, part of the 50S ribosomal subunit.

Its function is as follows. Binds directly to 23S rRNA. The L1 stalk is quite mobile in the ribosome, and is involved in E site tRNA release. Functionally, protein L1 is also a translational repressor protein, it controls the translation of the L11 operon by binding to its mRNA. The protein is Large ribosomal subunit protein uL1 of Nautilia profundicola (strain ATCC BAA-1463 / DSM 18972 / AmH).